The primary structure comprises 282 residues: Pantothenate synthetase (282 aa).

30–37 (MGALHQGH) is a binding site for ATP. H37 acts as the Proton donor in catalysis. A (R)-pantoate-binding site is contributed by Q61. Residue Q61 coordinates beta-alanine. 149–152 (GEKD) contacts ATP. Q155 is a (R)-pantoate binding site. Residues L178 and 186–189 (MSSR) each bind ATP.

Belongs to the pantothenate synthetase family. As to quaternary structure, homodimer.

It localises to the cytoplasm. It catalyses the reaction (R)-pantoate + beta-alanine + ATP = (R)-pantothenate + AMP + diphosphate + H(+). It participates in cofactor biosynthesis; (R)-pantothenate biosynthesis; (R)-pantothenate from (R)-pantoate and beta-alanine: step 1/1. Functionally, catalyzes the condensation of pantoate with beta-alanine in an ATP-dependent reaction via a pantoyl-adenylate intermediate. This Flavobacterium psychrophilum (strain ATCC 49511 / DSM 21280 / CIP 103535 / JIP02/86) protein is Pantothenate synthetase.